We begin with the raw amino-acid sequence, 194 residues long: Large ribosomal subunit protein eL15 (194 aa).

A disordered region spans residues 161-194 (GLTSAGKKGRGLMYKGKGAEKARPSVRANGKKTK).

Belongs to the eukaryotic ribosomal protein eL15 family.

The polypeptide is Large ribosomal subunit protein eL15 (Methanococcus maripaludis (strain C5 / ATCC BAA-1333)).